Consider the following 318-residue polypeptide: Cis-3-alkyl-4-alkyloxetan-2-one decarboxylase (318 aa).

Residues 30-275 (PVVMVHGNPS…ADCGHYILED (246 aa)) form the AB hydrolase-1 domain.

This sequence belongs to the AB hydrolase superfamily.

It carries out the reaction a cis-3-alkyl-4-alkyloxetan-2-one = a cis-alkene + CO2. Its function is as follows. Involved in olefin biosynthesis. Catalyzes the elimination of carbon dioxide from beta-lactones to form the final olefin product. The S.oneidensis oleABCD genes produce 3,6,9,12,15,19,22,25,28-hentriacontanonaene, which may aid the cells in adapting to a sudden drop in temperature. The sequence is that of Cis-3-alkyl-4-alkyloxetan-2-one decarboxylase from Shewanella oneidensis (strain ATCC 700550 / JCM 31522 / CIP 106686 / LMG 19005 / NCIMB 14063 / MR-1).